We begin with the raw amino-acid sequence, 301 residues long: 2-phosphoglycerate kinase (301 aa).

The ATP-cone domain occupies 2–89 (IRVIEKGDKV…FWRRFRKMKV (88 aa)).

The protein belongs to the 2-phosphoglycerate kinase family. The cofactor is a divalent metal cation.

It catalyses the reaction (2R)-2-phosphoglycerate + ATP = (2R)-2,3-bisphosphoglycerate + ADP + H(+). It functions in the pathway thermoadapter biosynthesis; cyclic 2,3-diphosphoglycerate biosynthesis; cyclic 2,3-diphosphoglycerate from 2-phospho-D-glycerate: step 1/2. Functionally, catalyzes the phosphorylation of 2-phosphoglycerate to 2,3-diphosphoglycerate. Involved in the biosynthesis of cyclic 2,3-bisphosphoglycerate, a thermoprotectant. This is 2-phosphoglycerate kinase from Pyrococcus horikoshii (strain ATCC 700860 / DSM 12428 / JCM 9974 / NBRC 100139 / OT-3).